Consider the following 271-residue polypeptide: 3-methyl-2-oxobutanoate hydroxymethyltransferase (271 aa).

Mg(2+) is bound by residues Asp51 and Asp90. 3-methyl-2-oxobutanoate contacts are provided by residues Asp51–Ser52, Asp90, and Lys118. Residue Glu120 participates in Mg(2+) binding. The active-site Proton acceptor is the Glu186.

Belongs to the PanB family. As to quaternary structure, homodecamer; pentamer of dimers. The cofactor is Mg(2+).

The protein resides in the cytoplasm. The enzyme catalyses 3-methyl-2-oxobutanoate + (6R)-5,10-methylene-5,6,7,8-tetrahydrofolate + H2O = 2-dehydropantoate + (6S)-5,6,7,8-tetrahydrofolate. It functions in the pathway cofactor biosynthesis; (R)-pantothenate biosynthesis; (R)-pantoate from 3-methyl-2-oxobutanoate: step 1/2. Its function is as follows. Catalyzes the reversible reaction in which hydroxymethyl group from 5,10-methylenetetrahydrofolate is transferred onto alpha-ketoisovalerate to form ketopantoate. This is 3-methyl-2-oxobutanoate hydroxymethyltransferase from Xanthomonas oryzae pv. oryzae (strain PXO99A).